The following is a 125-amino-acid chain: Ribosome-binding factor A (125 aa).

This sequence belongs to the RbfA family. Monomer. Binds 30S ribosomal subunits, but not 50S ribosomal subunits or 70S ribosomes.

It is found in the cytoplasm. Its function is as follows. One of several proteins that assist in the late maturation steps of the functional core of the 30S ribosomal subunit. Associates with free 30S ribosomal subunits (but not with 30S subunits that are part of 70S ribosomes or polysomes). Required for efficient processing of 16S rRNA. May interact with the 5'-terminal helix region of 16S rRNA. This is Ribosome-binding factor A from Thermosipho melanesiensis (strain DSM 12029 / CIP 104789 / BI429).